A 349-amino-acid chain; its full sequence is tRNA N6-adenosine threonylcarbamoyltransferase (349 aa).

Fe cation contacts are provided by histidine 116 and histidine 120. Residues 139–143, aspartate 172, glycine 185, and asparagine 283 each bind substrate; that span reads LVSGG. A Fe cation-binding site is contributed by aspartate 311.

Belongs to the KAE1 / TsaD family. Fe(2+) is required as a cofactor.

Its subcellular location is the cytoplasm. The enzyme catalyses L-threonylcarbamoyladenylate + adenosine(37) in tRNA = N(6)-L-threonylcarbamoyladenosine(37) in tRNA + AMP + H(+). Functionally, required for the formation of a threonylcarbamoyl group on adenosine at position 37 (t(6)A37) in tRNAs that read codons beginning with adenine. Is involved in the transfer of the threonylcarbamoyl moiety of threonylcarbamoyl-AMP (TC-AMP) to the N6 group of A37, together with TsaE and TsaB. TsaD likely plays a direct catalytic role in this reaction. The sequence is that of tRNA N6-adenosine threonylcarbamoyltransferase from Colwellia psychrerythraea (strain 34H / ATCC BAA-681) (Vibrio psychroerythus).